Here is a 92-residue protein sequence, read N- to C-terminus: Small ribosomal subunit protein uS19c (92 aa).

Belongs to the universal ribosomal protein uS19 family.

It localises to the plastid. Its subcellular location is the chloroplast. Its function is as follows. Protein S19 forms a complex with S13 that binds strongly to the 16S ribosomal RNA. This is Small ribosomal subunit protein uS19c from Populus alba (White poplar).